Reading from the N-terminus, the 1134-residue chain is Ovochymase-1 (1134 aa).

The signal sequence occupies residues 1 to 22 (MGLLASAGLLLLLVIGHPRSLG). A propeptide spans 23–46 (LKCGIRMVNMKSKEPAVGSRFFSR) (activation peptide). One can recognise a Peptidase S1 1 domain in the interval 38–296 (AVGSRFFSRI…LMDFITQNLF (259 aa)). The N-linked (GlcNAc...) asparagine glycan is linked to asparagine 52. Cysteine 72 and cysteine 88 are oxidised to a cystine. The active-site Charge relay system is the histidine 87. A glycan (N-linked (GlcNAc...) asparagine) is linked at asparagine 99. Ca(2+) is bound at residue glutamate 116. The Charge relay system role is filled by aspartate 139. 3 cysteine pairs are disulfide-bonded: cysteine 173/cysteine 243, cysteine 204/cysteine 222, and cysteine 233/cysteine 262. Residue serine 237 is the Charge relay system of the active site. 2 CUB domains span residues 284–410 (VSEL…VTAV) and 419–531 (CGSL…FTIL). The N-linked (GlcNAc...) asparagine glycan is linked to asparagine 324. Intrachain disulfides connect cysteine 341-cysteine 373, cysteine 419-cysteine 446, and cysteine 473-cysteine 494. Asparagine 431 carries N-linked (GlcNAc...) asparagine glycosylation. An N-linked (GlcNAc...) asparagine glycan is attached at asparagine 507. The 238-residue stretch at 575-812 (IAGGEEACPH…FLDWIQSKIN (238 aa)) folds into the Peptidase S1 2 domain. Cysteine 600 and cysteine 616 are joined by a disulfide. Residues histidine 615 and aspartate 664 each act as charge relay system in the active site. Cystine bridges form between cysteine 698-cysteine 769, cysteine 729-cysteine 747, cysteine 759-cysteine 788, and cysteine 846-cysteine 873. The active-site Charge relay system is the serine 763. The CUB 3 domain occupies 846-957 (CSEAELEKPR…GAFGISYIVL (112 aa)). Asparagine 1106 carries an N-linked (GlcNAc...) asparagine glycan.

The protein belongs to the peptidase S1 family.

The protein resides in the secreted. The protein is Ovochymase-1 (OVCH1) of Homo sapiens (Human).